The primary structure comprises 101 residues: B3 domain-containing protein At1g08985 (101 aa).

The segment at residues 7 to 101 (IVKTLSETDC…WQNTKFIFSM (95 aa)) is a DNA-binding region (TF-B3).

It localises to the nucleus. The polypeptide is B3 domain-containing protein At1g08985 (Arabidopsis thaliana (Mouse-ear cress)).